The following is a 134-amino-acid chain: Glycine cleavage system H protein (134 aa).

One can recognise a Lipoyl-binding domain in the interval 24–106 (TVRVGITDYA…YGAGWLLDIQ (83 aa)). Lysine 65 is modified (N6-lipoyllysine).

It belongs to the GcvH family. The glycine cleavage system is composed of four proteins: P, T, L and H. Requires (R)-lipoate as cofactor.

Its function is as follows. The glycine cleavage system catalyzes the degradation of glycine. The H protein shuttles the methylamine group of glycine from the P protein to the T protein. In Mycobacterium bovis (strain ATCC BAA-935 / AF2122/97), this protein is Glycine cleavage system H protein.